The following is an 88-amino-acid chain: Small ribosomal subunit protein bS20 (88 aa).

The tract at residues 1–20 (MANTKSARKSLIKSKQQRKC) is disordered.

It belongs to the bacterial ribosomal protein bS20 family.

Its function is as follows. Binds directly to 16S ribosomal RNA. In Blochmanniella pennsylvanica (strain BPEN), this protein is Small ribosomal subunit protein bS20.